A 318-amino-acid polypeptide reads, in one-letter code: Petal death protein (318 aa).

Positions 1–3 are cleaved as a propeptide — removed in mature form; that stretch reads MAP. The segment at 1 to 24 is disordered; it reads MAPPNGTTNGETEVATQGSYTAVS. Mg(2+) is bound by residues Asp-107, Asp-109, and Lys-142.

The protein belongs to the isocitrate lyase/PEP mutase superfamily. As to quaternary structure, homodimer and homotetramer formed by a dimer of homodimer. Mg(2+) is required as a cofactor. Requires Mn(2+) as cofactor. It depends on Fe(2+) as a cofactor. Co(2+) serves as cofactor. As to expression, accumulates in senescing flower petals.

The enzyme catalyses oxaloacetate + H2O = oxalate + acetate + H(+). Its function is as follows. Catalyzes cleavage of the C(2)-C(3) bond in oxaloacetate and in (2R)-alkyl malate derivatives to form oxalate and acetate, and alkyl carboxylates and R-ketocarboxylates, respectively. This Dianthus caryophyllus (Carnation) protein is Petal death protein.